The chain runs to 2372 residues: Nonribosomal peptide synthase roqA (2372 aa).

Positions 217–610 (EHCRSQPDAE…VGRKDREVKI (394 aa)) are adenylation 1. Positions 723–745 (AASSHSSTREQPSNQRDKEDVEL) are disordered. Over residues 725–736 (SSHSSTREQPSN) the composition is skewed to polar residues. The 74-residue stretch at 750-823 (SAKENTLCSV…KIARCTAESK (74 aa)) folds into the Carrier 1 domain. Serine 784 bears the O-(pantetheine 4'-phosphoryl)serine mark. Residues 856 to 1122 (EDIYPCTPLQ…FATFPFRTQL (267 aa)) are condensation 1. The adenylation 2 stretch occupies residues 1290–1679 (QPNSEAVCAW…VGRKDTQVKL (390 aa)). Residues 1819–1895 (KPTTEQERFV…LFCKHVILIQ (77 aa)) form the Carrier 2 domain. The residue at position 1856 (serine 1856) is an O-(pantetheine 4'-phosphoryl)serine. Residues 1962–2227 (TSNYTSTAIF…FNVLPCRIAI (266 aa)) are condensation 2.

It functions in the pathway alkaloid biosynthesis. Functionally, dipeptide synthase; part of the gene cluster that mediates the biosynthesis of the mycotoxins roquefortine C and meleagrin. The first stage is catalyzed by the dipeptide synthase roqA which condenses histidine and tryptophan to produce histidyltryptophanyldiketopiperazine (HTD). HTD is then converted to roquefortine C through two possible pathways. In the first pathway, prenyltransferase roqD transforms HTD to the intermediate roquefortine D, which is in turn converted to roquefortine C by the cytochrome P450 monooxygenase roqR. In the second pathway, HTD is first converted to the intermediate dehydrohistidyltryptophanyldi-ketopiperazine (DHTD) by roqR which is then prenylated by roqD to form roquefortine C. Roquefortine C can be further transformed to meleagrin via three more reactions including oxydation to glandicolin A by roqM, which is further reduced to glandicoline B by roqO. Finally, glandicoline B is converted to meleagrin by the glandicoline B O-methyltransferase roqN. More studies identified further branching and additional metabolites produced by the roquefortine/meleagrin cluster, including roquefortine F, roquefortine L, roquefortine M, roquefortine N and neoxaline. This Penicillium rubens (strain ATCC 28089 / DSM 1075 / NRRL 1951 / Wisconsin 54-1255) (Penicillium chrysogenum) protein is Nonribosomal peptide synthase roqA.